Consider the following 66-residue polypeptide: Large ribosomal subunit protein bL31 (66 aa).

Zn(2+)-binding residues include C16, C18, C36, and C39.

The protein belongs to the bacterial ribosomal protein bL31 family. Type A subfamily. Part of the 50S ribosomal subunit. Zn(2+) serves as cofactor.

Binds the 23S rRNA. This is Large ribosomal subunit protein bL31 from Thermodesulfovibrio yellowstonii (strain ATCC 51303 / DSM 11347 / YP87).